Reading from the N-terminus, the 212-residue chain is Transcription factor MYB8 (212 aa).

HTH myb-type domains are found at residues 9 to 61 and 62 to 116; these read KAHM…INYL and RPDL…KRKL. DNA-binding regions (H-T-H motif) lie at residues 37–61 and 89–112; these read WRSL…INYL and WSLI…NTHI.

Its subcellular location is the nucleus. Its function is as follows. Transcription activator. The polypeptide is Transcription factor MYB8 (Arabidopsis thaliana (Mouse-ear cress)).